The chain runs to 422 residues: UDP-N-acetylglucosamine 1-carboxyvinyltransferase (422 aa).

Phosphoenolpyruvate is bound at residue 22-23; the sequence is KN. UDP-N-acetyl-alpha-D-glucosamine is bound at residue arginine 95. Cysteine 119 functions as the Proton donor in the catalytic mechanism. Cysteine 119 is modified (2-(S-cysteinyl)pyruvic acid O-phosphothioketal). UDP-N-acetyl-alpha-D-glucosamine-binding positions include 124 to 128, aspartate 309, and valine 331; that span reads RPIDQ.

The protein belongs to the EPSP synthase family. MurA subfamily.

It is found in the cytoplasm. The catalysed reaction is phosphoenolpyruvate + UDP-N-acetyl-alpha-D-glucosamine = UDP-N-acetyl-3-O-(1-carboxyvinyl)-alpha-D-glucosamine + phosphate. It functions in the pathway cell wall biogenesis; peptidoglycan biosynthesis. In terms of biological role, cell wall formation. Adds enolpyruvyl to UDP-N-acetylglucosamine. This Anaeromyxobacter sp. (strain Fw109-5) protein is UDP-N-acetylglucosamine 1-carboxyvinyltransferase.